The primary structure comprises 446 residues: Iroquois homeobox protein 5a (446 aa).

The segment at residues 117-173 is a DNA-binding region (homeobox); the sequence is NATRDATATLKAWLNEHRKNPYPTKGEKIMLAIITKMTLTQVSTWFANARRRLKKEN. A disordered region spans residues 175 to 312; sequence MTWTPRNRSE…IHSPPSAPKP (138 aa). Over residues 184-201 the composition is skewed to acidic residues; it reads EDEEEDENIDLEKNDDDE. Basic and acidic residues-rich tracts occupy residues 202 to 220 and 227 to 258; these read PNKPTDKGDSTDTEADHKL and PCDRFKDETHSKDLDPPLTDSELKEAEERTDL. 2 stretches are compositionally biased toward polar residues: residues 264–274 and 293–303; these read KPTTSSPSVLQ and STGNSNVTSVI.

The protein belongs to the TALE/IRO homeobox family.

It localises to the nucleus. Its function is as follows. Transcription factor. Binds to consensus iroquois binding site (IBS) motifs 5'-ACANNTGT-3' or 5'-ACANNNTGT-3' in regulatory elements of target genes. Required, together with irx7, for hyoid joint formation; they act cell autonomously to repress expression of cartilage matrix genes, such as collagen col2a1a, within immature chondrocytes of the joint interzone. May compete with or modify Sox9a activity, thereby reducing Sox9a-mediated activation of col2a1a. Probably acts in the developing hyoid joint downstream of Bmp signaling. In concert with irx6a, plays a role in visual performance. In Danio rerio (Zebrafish), this protein is Iroquois homeobox protein 5a (irx5a).